The primary structure comprises 159 residues: Ribosomal RNA large subunit methyltransferase H (159 aa).

Residues Leu76, Gly108, and 127-132 contribute to the S-adenosyl-L-methionine site; that span reads FSKMTF.

This sequence belongs to the RNA methyltransferase RlmH family. In terms of assembly, homodimer.

It is found in the cytoplasm. It catalyses the reaction pseudouridine(1915) in 23S rRNA + S-adenosyl-L-methionine = N(3)-methylpseudouridine(1915) in 23S rRNA + S-adenosyl-L-homocysteine + H(+). Specifically methylates the pseudouridine at position 1915 (m3Psi1915) in 23S rRNA. In Clostridium tetani (strain Massachusetts / E88), this protein is Ribosomal RNA large subunit methyltransferase H.